Consider the following 533-residue polypeptide: Calcitonin receptor (533 aa).

Positions 1-41 are cleaved as a signal peptide; sequence MTPRRSRVKRRNLRKPKMRFLLVNRFTLLLLLLVSPTPVLQ. Over 42–163 the chain is Extracellular; it reads APTNLTDSGL…FTSEKLQNAY (122 aa). 4 N-linked (GlcNAc...) asparagine glycosylation sites follow: asparagine 45, asparagine 90, asparagine 142, and asparagine 147. 3 disulfide bridges follow: cysteine 72/cysteine 98, cysteine 89/cysteine 129, and cysteine 112/cysteine 151. The chain crosses the membrane as a helical span at residues 164 to 186; sequence VLYYLALVGHSLSIAALVASMLI. Over 187–198 the chain is Cytoplasmic; sequence FWIFKNLSCQRV. A helical transmembrane segment spans residues 199 to 219; sequence TLHKHMFLTYILNSIIIIIHL. The Extracellular portion of the chain corresponds to 220-273; sequence VEVVPNGDLVRRDPMHIFHHNTHMWTMQWELSPPLPLSAHEGKMDPHASEVISC. Cysteine 273 and cysteine 343 are joined by a disulfide. A helical membrane pass occupies residues 274-296; the sequence is KVLHFLHQYMMSCNYFWMLCEGI. The Cytoplasmic segment spans residues 297-313; that stretch reads YLHTLIVMAVFTDEQRL. Residues 314–334 traverse the membrane as a helical segment; that stretch reads RWYYLLGWGFPIVPTIIHAIT. Over 335-350 the chain is Extracellular; that stretch reads RALYYNDNCWLSAETH. Residues 351–374 form a helical membrane-spanning segment; the sequence is LLYIIHGPVMVALVVNFFFLLNIV. Over 375 to 394 the chain is Cytoplasmic; that stretch reads RVLVTKMRQTHEAESYMYLK. The chain crosses the membrane as a helical span at residues 395 to 413; that stretch reads AVKATMVLVPLLGIQFVVF. Over 414 to 421 the chain is Extracellular; the sequence is PWRPSNKV. The helical transmembrane segment at 422-448 threads the bilayer; sequence LGKIYDYLMHSLIHFQGFFVATIYCFC. The Cytoplasmic segment spans residues 449–533; it reads NHEVQVTLKR…MNVIQQDASA (85 aa).

This sequence belongs to the G-protein coupled receptor 2 family. As to quaternary structure, heterodimer of CALCR and RAMP1, RAMP2 or RAMP3; the receptor complexes function as AMYR1, AMYR2 and AMYR3 receptors, respectively, and respond to amylin/IAPP, calcitonin/CT and CGRP1 ligands. Interacts with GPRASP2.

It is found in the cell membrane. In terms of biological role, g protein-coupled receptor activated by ligand peptides amylin (IAPP), calcitonin (CT/CALCA) and calcitonin gene-related peptide type 1 (CGRP1/CALCA). CALCR interacts with receptor-activity-modifying proteins RAMP1, 2 and 3 to form receptor complexes AMYR1, 2 and 3, respectively. IAPP, CT and CGRP1 activate CALCR and AMYRs with distinct modes of receptor activation resulting in specific phenotypes. Ligand binding causes a conformation change that triggers signaling via guanine nucleotide-binding proteins (G proteins) and modulates the activity of downstream effectors. Activates cAMP-dependent pathway. This is Calcitonin receptor from Mus musculus (Mouse).